The chain runs to 2168 residues: Bromodomain adjacent to zinc finger domain protein 2B (2168 aa).

Disordered stretches follow at residues 1-29, 140-348, 409-428, 459-479, 528-698, 719-740, 841-872, and 1021-1043; these read MESGERLPSSAASSTTPTSSSTPSVASVV, FAPP…KQPQ, LKAGNKNTSEESSLLTSELR, SNPKATSSSPAHPKQTLENNH, STPF…LHIA, GTSSSTLTSSPHSGTSKRRRVT, MEGRRGRPPNPDRQRAREESRMRRRKGRPPNV, and RKKAEEKERLKQEKRDEKRLNKE. Residues 8–29 show a composition bias toward low complexity; that stretch reads PSSAASSTTPTSSSTPSVASVV. 2 stretches are compositionally biased toward polar residues: residues 146–163 and 171–193; these read NHDSSSFHSRTSGKSNRN and GSINGSNTSSVIGINTSVLSTTA. Composition is skewed to low complexity over residues 194–204 and 240–263; these read SSSMGQTKSTS and ESSSNSDSDSGTSSDTSSEGISSS. The span at 264–291 shows a compositional bias: acidic residues; it reads DSDDLEEDEEEEDQSIEESEDDDSDSES. Residues 307–325 are compositionally biased toward basic and acidic residues; sequence SDPKADGQKATEKAQEKRI. Residues 335–348 are compositionally biased toward low complexity; that stretch reads SQTHSFQSQQKQPQ. 2 stretches are compositionally biased toward polar residues: residues 461–479 and 528–551; these read PKATSSSPAHPKQTLENNH and STPFSSPVNLSTSGRRTPGNQTPV. Over residues 592–605 the composition is skewed to basic and acidic residues; it reads RGTDSDIPSSKDSE. A compositionally biased stretch (acidic residues) spans 606–663; that stretch reads DSNEDEEEDDEEEDEEDDEDDESDDSQSESDSNSESDTEGSEEEDDDDKDQDESDSDT. Over residues 670–693 the composition is skewed to polar residues; it reads MKLNKTTSSVKSPSMSLTGHSTPR. A compositionally biased stretch (low complexity) spans 720-732; the sequence is TSSSTLTSSPHSG. The MBD domain occupies 739 to 810; sequence VTDERELRIP…DNFSFSAKIR (72 aa). Residues 841–861 are compositionally biased toward basic and acidic residues; that stretch reads MEGRRGRPPNPDRQRAREESR. Residues 883-1061 are a coiled coil; that stretch reads AKLLRKLQAQ…ELEMAKELKK (179 aa). A DDT domain is found at 1087 to 1152; the sequence is GSTFSDCLMV…LSAAVCDPGL (66 aa). The tract at residues 1265–1341 is disordered; sequence KRDTSGGIDL…CEDEDEGDQA (77 aa). Over residues 1297 to 1321 the composition is skewed to acidic residues; the sequence is SDYDDDDDDDSDDQGDEDDEDEEDK. Residues 1322 to 1331 are compositionally biased toward basic and acidic residues; it reads EDKKGKKTDI. The stretch at 1334-1375 forms a coiled coil; sequence DEDEGDQAASVEELEKQIEKLSKQQSQYRRKLFDASHSLRSV. K1425 participates in a covalent cross-link: Glycyl lysine isopeptide (Lys-Gly) (interchain with G-Cter in SUMO2). Position 1462 is an N6-acetyllysine (K1462). Phosphoserine is present on residues S1465 and S1467. Positions 1503–1533 are enriched in polar residues; it reads SGKHSLGSVQSTATQSNVEKADSNNLFNTGS. Disordered regions lie at residues 1503–1542, 1582–1607, and 1670–1694; these read SGKHSLGSVQSTATQSNVEKADSNNLFNTGSSGPGKFYSP, SLVTPQSQPPSKSPSPTPAPLGSSAQ, and TSNVASSKSESPVPQNEKATSAQPA. The span at 1588 to 1600 shows a compositional bias: pro residues; sequence SQPPSKSPSPTPA. Polar residues predominate over residues 1670–1692; that stretch reads TSNVASSKSESPVPQNEKATSAQ. At S1680 the chain carries Phosphoserine. A PHD-type zinc finger spans residues 1931-1981; it reads KVYCQICRKGDNEELLLLCDGCDKGCHTYCHRPKITTIPDGDWFCPACIAK. The segment at 1998–2040 is disordered; that stretch reads KTNESKKGKKVTLTGDTEDEDSASTSSSLKRGNKDLKKRKMEE. At T2014 the chain carries Phosphothreonine. At S2019 the chain carries Phosphoserine. Residues 2029–2040 are compositionally biased toward basic and acidic residues; it reads GNKDLKKRKMEE. In terms of domain architecture, Bromo spans 2060–2164; it reads RDDSKDLALC…KYFEKKWTDT (105 aa).

It belongs to the WAL family. As to quaternary structure, component of the BRF-1 ISWI chromatin remodeling complex, at least composed of SMARCA1 and BAZ2B, which regulates the spacing of histone octamers on the DNA template to facilitate access to DNA. Within the BRF-1 ISWI chromatin remodeling complex interacts with SMARCA1; the interaction is direct. Component of the BRF-5 ISWI chromatin remodeling complex, at least composed of SMARCA5/SNF2H and BAZ2B, which regulates the spacing of histone octamers on the DNA template to facilitate access to DNA. Within the BRF-5 ISWI chromatin remodeling complex interacts with SMARCA5/SNF2H; the interaction is direct. Interacts with acetylated lysine residues on histone H1.4, H2A, H2B, H3 and H4 (in vitro). Interacts with EHMT1. Expressed at varying levels in several tissues, whereas a smaller transcript was expressed specifically in testis.

It localises to the nucleus. Functionally, regulatory subunit of the ATP-dependent BRF-1 and BRF-5 ISWI chromatin remodeling complexes, which form ordered nucleosome arrays on chromatin and facilitate access to DNA during DNA-templated processes such as DNA replication, transcription, and repair. Both complexes regulate the spacing of nucleosomes along the chromatin and have the ability to slide mononucleosomes to the center of a DNA template. The BRF-1 ISWI chromatin remodeling complex has a lower ATP hydrolysis rate than the BRF-5 ISWI chromatin remodeling complex. Chromatin reader protein, which may play a role in transcriptional regulation via interaction with ISWI. Involved in positively modulating the rate of age-related behavioral deterioration. Represses the expression of mitochondrial function-related genes, perhaps by occupying their promoter regions, working in concert with histone methyltransferase EHMT1. This chain is Bromodomain adjacent to zinc finger domain protein 2B (BAZ2B), found in Homo sapiens (Human).